Consider the following 288-residue polypeptide: Syntaxin-1A (288 aa).

Residues 1-265 lie on the Cytoplasmic side of the membrane; it reads MKDRTQELRT…KYQSKARRKK (265 aa). 3 positions are modified to phosphoserine: Ser-14, Ser-64, and Ser-95. The stretch at 68 to 109 forms a coiled coil; that stretch reads DEKTKEELEELMSDIKKTANKVRSKLKSIEQSIEQEEGLNRS. Residue Ser-188 is modified to Phosphoserine; by DAPK1. The region spanning 192–254 is the t-SNARE coiled-coil homology domain; that stretch reads LSEIETRHSE…ERAVSDTKKA (63 aa). Glycyl lysine isopeptide (Lys-Gly) (interchain with G-Cter in SUMO) cross-links involve residues Lys-252, Lys-253, and Lys-256. A helical; Anchor for type IV membrane protein transmembrane segment spans residues 266 to 286; that stretch reads IMIIICCVIPGIVIASTVGGI. Residues 287–288 are Extracellular-facing; it reads FA.

The protein belongs to the syntaxin family. As to quaternary structure, part of the SNARE core complex containing SNAP25, VAMP2 and STX1A; this complex constitutes the basic catalytic machinery of the complex neurotransmitter release apparatus. The SNARE complex interacts with CPLX1. Interacts with STXBP1. The interaction with STXBP1 promotes assembly of the SNARE complex. Interacts (via C-terminus) with KCNB1 (via C-terminus); the interaction increases in a calcium-dependent manner and induces a pore-independent enhancement of exocytosis in neuroendocrine cells, chromaffin cells, pancreatic beta cells and from the soma of dorsal root ganglia (DRG) neurons. Interacts with SYTL4. Interacts with STXBP6. Interacts with PLCL1 (via C2 domain). Interacts with OTOF. Interacts with LGI3. Interacts (via the H3 domain) with SLC6A4 (via the N-terminus); this interaction regulates SLC4A6 channel conductance in thalamocortical neurons. Interacts with SYT6 and SYT8; the interaction is Ca(2+)-dependent. Interacts with VAMP8. Interacts with SNAP23. Interacts with VAPA and SYBU. Interacts with PRRT2. Interacts with SEPT8. Interacts with STXBP5L. Interacts with synaptotagmin-1/SYT1. Interacts with SEPTIN5; in the cerebellar cortex. Interacts with SEPTIN4; in the striatum. Post-translationally, phosphorylated by CK2. Phosphorylation at Ser-188 by DAPK1 significantly decreases its interaction with STXBP1. Sumoylated, sumoylation is required for regulation of synaptic vesicle endocytosis.

It localises to the cytoplasmic vesicle. Its subcellular location is the secretory vesicle. The protein resides in the synaptic vesicle membrane. The protein localises to the cell membrane. It is found in the synapse. It localises to the synaptosome. Plays an essential role in hormone and neurotransmitter calcium-dependent exocytosis and endocytosis. Part of the SNARE (Soluble NSF Attachment Receptor) complex composed of SNAP25, STX1A and VAMP2 which mediates the fusion of synaptic vesicles with the presynaptic plasma membrane. STX1A and SNAP25 are localized on the plasma membrane while VAMP2 resides in synaptic vesicles. The pairing of the three SNAREs from the N-terminal SNARE motifs to the C-terminal anchors leads to the formation of the SNARE complex, which brings membranes into close proximity and results in final fusion. Participates in the calcium-dependent regulation of acrosomal exocytosis in sperm. Also plays an important role in the exocytosis of hormones such as insulin or glucagon-like peptide 1 (GLP-1). In Pongo abelii (Sumatran orangutan), this protein is Syntaxin-1A (STX1A).